We begin with the raw amino-acid sequence, 955 residues long: Thrombospondin-4 (955 aa).

Residues 1 to 24 (MPRRKGLCLFLQMLLLHLYGVCQA) form the signal peptide. A Laminin G-like domain is found at 25 to 192 (QPNYQVFDLL…MDELKLVMGG (168 aa)). Positions 281–320 (PKPRCDATSCFRGVRCIDTEGGFQCGPCPEGYTGNGVICT) constitute an EGF-like 1 domain. Disulfide bonds link C285/C296, C290/C305, C308/C319, C325/C336, C330/C345, C348/C372, C378/C392, C386/C401, C404/C416, C422/C435, C429/C445, C447/C458, C474/C479, C484/C504, C520/C540, C543/C563, C579/C599, C602/C622, C640/C660, C680/C700, and C716/C937. Residues 321–358 (DVDECRLNPCFLGVRCINTSPGFKCESCPPGYTGSTIQ) enclose the EGF-like 2; calcium-binding domain. The EGF-like 3; calcium-binding domain maps to 374-415 (DTNECENGRNGGCTSNSLCINTMGSFRCGGCKPGYVGDQIKG). The 42-residue stretch at 418–459 (PEKSCRHGQNPCHASAQCSEEKDGDVTCTCSVGWAGNGYLCG) folds into the EGF-like 4 domain. TSP type-3 repeat units follow at residues 460 to 492 (KDTD…NSGQ), 493 to 528 (EDTD…NIDQ), 529 to 551 (KNSD…NNDQ), 552 to 587 (RDTD…NVDQ), 588 to 610 (KDKD…NPNQ), 611 to 648 (SDID…NSNQ), 649 to 688 (LDTD…NPGQ), and 689 to 724 (EDDN…EITL). N609 carries an N-linked (GlcNAc...) asparagine glycan. The interval 610-678 (QSDIDNDLVG…IPDTVPPGPD (69 aa)) is disordered. A compositionally biased stretch (polar residues) spans 637–649 (TDNCPTVINSNQL). Acidic residues predominate over residues 657–668 (GDECDDDDDNDG). Residues 728–942 (RAYQTVVLDP…LKYRCNDTIP (215 aa)) enclose the TSP C-terminal domain. N-linked (GlcNAc...) asparagine glycosylation is present at N938.

The protein belongs to the thrombospondin family. As to quaternary structure, homotrimer; disulfide-linked.

The protein localises to the endoplasmic reticulum. Its subcellular location is the sarcoplasmic reticulum. It is found in the secreted. The protein resides in the extracellular space. It localises to the extracellular matrix. Functionally, adhesive glycoprotein that mediates cell-to-cell and cell-to-matrix interactions and may be involved in various processes including cellular proliferation, migration, adhesion and attachment. May play a role in ER stress response. May participate in the genesis and function of cardiac and skeletal muscle. This chain is Thrombospondin-4 (thbs4), found in Xenopus laevis (African clawed frog).